Reading from the N-terminus, the 381-residue chain is ADP,ATP carrier protein 1, mitochondrial (381 aa).

The transit peptide at 1–70 (MVDQVQHPTI…ATTASPVFVQ (70 aa)) directs the protein to the mitochondrion. Solcar repeat units follow at residues 78–171 (TNFA…FKRL), 183–276 (KWFA…VKPV), and 284–370 (DSFF…LQLI). Helical transmembrane passes span 80-107 (FALDFLMGGVSAAVSKTAAAPIERVKLL), 148-172 (TANVIRYFPTQALNFAFKDYFKRLF), 181-201 (YWKWFAGNLASGGAAGASSLL), 252-273 (FNISCVGIIVYRGLYFGLYDSV), and 287-307 (FASFALGWVITNGAGLASYPI). Positions 153 and 165 each coordinate ADP. Residue Arg311 coordinates ADP. The tract at residues 311 to 316 (RRRMMM) is important for transport activity. The Nucleotide carrier signature motif motif lies at 311 to 316 (RRRMMM). The helical transmembrane segment at 347–367 (AGANILRAVAGAGVLSGYDKL) threads the bilayer.

This sequence belongs to the mitochondrial carrier (TC 2.A.29) family. In terms of assembly, monomer.

It is found in the mitochondrion inner membrane. The catalysed reaction is ADP(in) + ATP(out) = ADP(out) + ATP(in). With respect to regulation, the matrix-open state (m-state) is inhibited by the membrane-permeable bongkrekic acid (BKA). The cytoplasmic-open state (c-state) is inhibited by the membrane-impermeable toxic inhibitor carboxyatractyloside (CATR). ADP:ATP antiporter that mediates import of ADP into the mitochondrial matrix for ATP synthesis, and export of ATP out to fuel the cell. Cycles between the cytoplasmic-open state (c-state) and the matrix-open state (m-state): operates by the alternating access mechanism with a single substrate-binding site intermittently exposed to either the cytosolic (c-state) or matrix (m-state) side of the inner mitochondrial membrane. This is ADP,ATP carrier protein 1, mitochondrial (AAC1) from Arabidopsis thaliana (Mouse-ear cress).